A 321-amino-acid chain; its full sequence is Mitochondrial thiamine pyrophosphate carrier 1 (321 aa).

3 Solcar repeats span residues 12–110 (GSRQ…ISQM), 121–207 (PSSA…LKPV), and 216–311 (PLGS…AMGI). A run of 6 helical transmembrane segments spans residues 17-38 (VVVA…LDVI), 91-107 (LLYL…YTNI), 127-147 (FISG…LDLL), 182-199 (GLGA…LFFA), 213-231 (LPLP…ASVV), and 286-303 (GLTV…VTMW).

It belongs to the mitochondrial carrier (TC 2.A.29) family.

It localises to the mitochondrion inner membrane. In terms of biological role, mitochondrial transporter that mediates uptake of thiamine pyrophosphate (ThPP) into mitochondria. The chain is Mitochondrial thiamine pyrophosphate carrier 1 (TPC1) from Phaeosphaeria nodorum (strain SN15 / ATCC MYA-4574 / FGSC 10173) (Glume blotch fungus).